Here is a 177-residue protein sequence, read N- to C-terminus: Large ribosomal subunit protein uL10 (177 aa).

It belongs to the universal ribosomal protein uL10 family. As to quaternary structure, part of the ribosomal stalk of the 50S ribosomal subunit. The N-terminus interacts with L11 and the large rRNA to form the base of the stalk. The C-terminus forms an elongated spine to which L12 dimers bind in a sequential fashion forming a multimeric L10(L12)X complex.

Forms part of the ribosomal stalk, playing a central role in the interaction of the ribosome with GTP-bound translation factors. This is Large ribosomal subunit protein uL10 from Caldanaerobacter subterraneus subsp. tengcongensis (strain DSM 15242 / JCM 11007 / NBRC 100824 / MB4) (Thermoanaerobacter tengcongensis).